We begin with the raw amino-acid sequence, 116 residues long: Large ribosomal subunit protein uL18 (116 aa).

The protein belongs to the universal ribosomal protein uL18 family. In terms of assembly, part of the 50S ribosomal subunit; part of the 5S rRNA/L5/L18/L25 subcomplex. Contacts the 5S and 23S rRNAs.

Functionally, this is one of the proteins that bind and probably mediate the attachment of the 5S RNA into the large ribosomal subunit, where it forms part of the central protuberance. The chain is Large ribosomal subunit protein uL18 from Shewanella sp. (strain ANA-3).